The following is a 582-amino-acid chain: DNA mismatch repair protein MutL (582 aa).

Belongs to the DNA mismatch repair MutL/HexB family.

In terms of biological role, this protein is involved in the repair of mismatches in DNA. It is required for dam-dependent methyl-directed DNA mismatch repair. May act as a 'molecular matchmaker', a protein that promotes the formation of a stable complex between two or more DNA-binding proteins in an ATP-dependent manner without itself being part of a final effector complex. The polypeptide is DNA mismatch repair protein MutL (Chlamydia abortus (strain DSM 27085 / S26/3) (Chlamydophila abortus)).